The primary structure comprises 101 residues: NADH-quinone oxidoreductase subunit K (101 aa).

Helical transmembrane passes span 4–24 (LSDY…GIFV), 29–49 (IITL…NFVA), and 61–81 (IFVF…LAIL).

This sequence belongs to the complex I subunit 4L family. As to quaternary structure, NDH-1 is composed of 14 different subunits. Subunits NuoA, H, J, K, L, M, N constitute the membrane sector of the complex.

The protein resides in the cell inner membrane. It carries out the reaction a quinone + NADH + 5 H(+)(in) = a quinol + NAD(+) + 4 H(+)(out). Its function is as follows. NDH-1 shuttles electrons from NADH, via FMN and iron-sulfur (Fe-S) centers, to quinones in the respiratory chain. The immediate electron acceptor for the enzyme in this species is believed to be ubiquinone. Couples the redox reaction to proton translocation (for every two electrons transferred, four hydrogen ions are translocated across the cytoplasmic membrane), and thus conserves the redox energy in a proton gradient. This Ruthia magnifica subsp. Calyptogena magnifica protein is NADH-quinone oxidoreductase subunit K.